Consider the following 289-residue polypeptide: 4-hydroxybenzoate octaprenyltransferase (289 aa).

Transmembrane regions (helical) follow at residues 22-42 (AGWLLLLWPTLSALWLASHGF), 45-65 (WHLVTVFTLGTFLMRSAGCCI), 96-116 (LGLGAVLALLAFGLVLTTNAV), 118-138 (IAWSFAALAVTLAYPFAKRYV), 140-160 (MPQAVLGVAFSCGILMAFAAV), 164-184 (VPPLAWALLLGNLFWVIAYDT), 211-231 (VAGVMLSYLIFISIWAFALIQ), 236-256 (AIFMIAIALALAQALWHGWLI), and 267-287 (AFRLNHWLGFTVFAGVALSYW).

Belongs to the UbiA prenyltransferase family. The cofactor is Mg(2+).

The protein localises to the cell inner membrane. It carries out the reaction all-trans-octaprenyl diphosphate + 4-hydroxybenzoate = 4-hydroxy-3-(all-trans-octaprenyl)benzoate + diphosphate. Its pathway is cofactor biosynthesis; ubiquinone biosynthesis. In terms of biological role, catalyzes the prenylation of para-hydroxybenzoate (PHB) with an all-trans polyprenyl group. Mediates the second step in the final reaction sequence of ubiquinone-8 (UQ-8) biosynthesis, which is the condensation of the polyisoprenoid side chain with PHB, generating the first membrane-bound Q intermediate 3-octaprenyl-4-hydroxybenzoate. The sequence is that of 4-hydroxybenzoate octaprenyltransferase from Polaromonas naphthalenivorans (strain CJ2).